An 81-amino-acid chain; its full sequence is uncharacterized protein (81 aa).

This is an uncharacterized protein from Autographa californica nuclear polyhedrosis virus (AcMNPV).